The primary structure comprises 150 residues: Large ribosomal subunit protein uL15 (150 aa).

The disordered stretch occupies residues 1–57; that stretch reads MTLRLESLKPNKGARRRKLRKGRGIAAGQGASCGFGMRGQKSRSGRPTRPGFEGGQM. Residues 12–23 show a composition bias toward basic residues; that stretch reads KGARRRKLRKGR. Residues 25–37 show a composition bias toward gly residues; that stretch reads IAAGQGASCGFGM.

The protein belongs to the universal ribosomal protein uL15 family. As to quaternary structure, part of the 50S ribosomal subunit.

Its function is as follows. Binds to the 23S rRNA. This Synechococcus sp. (strain CC9311) protein is Large ribosomal subunit protein uL15.